A 558-amino-acid polypeptide reads, in one-letter code: UvrABC system protein C (558 aa).

The GIY-YIG domain occupies 12–92 (LLPGVYIFYG…IFNHKPKYNV (81 aa)). Residues 200 to 235 (SETLDLIEEKMKKHAKMMDFENAAKYRDLLVKFENV) enclose the UVR domain.

It belongs to the UvrC family. As to quaternary structure, interacts with UvrB in an incision complex.

Its subcellular location is the cytoplasm. Its function is as follows. The UvrABC repair system catalyzes the recognition and processing of DNA lesions. UvrC both incises the 5' and 3' sides of the lesion. The N-terminal half is responsible for the 3' incision and the C-terminal half is responsible for the 5' incision. This is UvrABC system protein C from Pseudothermotoga lettingae (strain ATCC BAA-301 / DSM 14385 / NBRC 107922 / TMO) (Thermotoga lettingae).